A 430-amino-acid polypeptide reads, in one-letter code: Adenylosuccinate synthetase (430 aa).

Residues glycine 12 to lysine 18 and glycine 40 to threonine 42 each bind GTP. Aspartate 13 serves as the catalytic Proton acceptor. Mg(2+)-binding residues include aspartate 13 and glycine 40. IMP is bound by residues aspartate 13–lysine 16, asparagine 38–histidine 41, threonine 128, arginine 142, glutamine 223, threonine 238, and arginine 302. Histidine 41 functions as the Proton donor in the catalytic mechanism. A substrate-binding site is contributed by threonine 298–arginine 304. GTP contacts are provided by residues arginine 304, serine 330–aspartate 332, and serine 412–glycine 414.

The protein belongs to the adenylosuccinate synthetase family. In terms of assembly, homodimer. Mg(2+) is required as a cofactor.

Its subcellular location is the cytoplasm. The catalysed reaction is IMP + L-aspartate + GTP = N(6)-(1,2-dicarboxyethyl)-AMP + GDP + phosphate + 2 H(+). Its pathway is purine metabolism; AMP biosynthesis via de novo pathway; AMP from IMP: step 1/2. Plays an important role in the de novo pathway of purine nucleotide biosynthesis. Catalyzes the first committed step in the biosynthesis of AMP from IMP. The chain is Adenylosuccinate synthetase from Streptococcus agalactiae serotype Ia (strain ATCC 27591 / A909 / CDC SS700).